A 100-amino-acid chain; its full sequence is MKISEEEVRHVANLSKLRFSDQETKEFASSLSKIVDMIELLNEVDTEGVPVTTTMADRKTVMREDIAQPGNNRDDLFKNVPQHQDYYIKVPAILEDGGDA.

It belongs to the GatC family. Heterotrimer of A, B and C subunits.

It carries out the reaction L-glutamyl-tRNA(Gln) + L-glutamine + ATP + H2O = L-glutaminyl-tRNA(Gln) + L-glutamate + ADP + phosphate + H(+). The enzyme catalyses L-aspartyl-tRNA(Asn) + L-glutamine + ATP + H2O = L-asparaginyl-tRNA(Asn) + L-glutamate + ADP + phosphate + 2 H(+). Functionally, allows the formation of correctly charged Asn-tRNA(Asn) or Gln-tRNA(Gln) through the transamidation of misacylated Asp-tRNA(Asn) or Glu-tRNA(Gln) in organisms which lack either or both of asparaginyl-tRNA or glutaminyl-tRNA synthetases. The reaction takes place in the presence of glutamine and ATP through an activated phospho-Asp-tRNA(Asn) or phospho-Glu-tRNA(Gln). This Streptococcus agalactiae serotype III (strain NEM316) protein is Aspartyl/glutamyl-tRNA(Asn/Gln) amidotransferase subunit C.